The primary structure comprises 501 residues: Glutamyl-tRNA(Gln) amidotransferase subunit A (501 aa).

Active-site charge relay system residues include lysine 80 and serine 155. Serine 179 serves as the catalytic Acyl-ester intermediate.

Belongs to the amidase family. GatA subfamily. Heterotrimer of A, B and C subunits.

The catalysed reaction is L-glutamyl-tRNA(Gln) + L-glutamine + ATP + H2O = L-glutaminyl-tRNA(Gln) + L-glutamate + ADP + phosphate + H(+). In terms of biological role, allows the formation of correctly charged Gln-tRNA(Gln) through the transamidation of misacylated Glu-tRNA(Gln) in organisms which lack glutaminyl-tRNA synthetase. The reaction takes place in the presence of glutamine and ATP through an activated gamma-phospho-Glu-tRNA(Gln). The polypeptide is Glutamyl-tRNA(Gln) amidotransferase subunit A (Cutibacterium acnes (strain DSM 16379 / KPA171202) (Propionibacterium acnes)).